Reading from the N-terminus, the 297-residue chain is Molybdate/tungstate import ATP-binding protein WtpC (297 aa).

Positions 2-226 (LKVNNLSKIW…PKNKKVAEFL (225 aa)) constitute an ABC transporter domain. 32 to 39 (GPSGAGKS) serves as a coordination point for ATP.

The protein belongs to the ABC transporter superfamily. Sulfate/tungstate importer (TC 3.A.1.6) family. In terms of assembly, the complex is composed of two ATP-binding proteins (WtpC), two transmembrane proteins (WtpB) and a solute-binding protein (WtpA).

The protein localises to the cell membrane. The enzyme catalyses tungstate(in) + ATP + H2O = tungstate(out) + ADP + phosphate + H(+). Its function is as follows. Part of the ABC transporter complex WtpABC involved in molybdate/tungstate import. Responsible for energy coupling to the transport system. In Methanocaldococcus jannaschii (strain ATCC 43067 / DSM 2661 / JAL-1 / JCM 10045 / NBRC 100440) (Methanococcus jannaschii), this protein is Molybdate/tungstate import ATP-binding protein WtpC (wtpC).